The sequence spans 186 residues: Elongation factor P (186 aa).

The protein belongs to the elongation factor P family.

It localises to the cytoplasm. It participates in protein biosynthesis; polypeptide chain elongation. In terms of biological role, involved in peptide bond synthesis. Stimulates efficient translation and peptide-bond synthesis on native or reconstituted 70S ribosomes in vitro. Probably functions indirectly by altering the affinity of the ribosome for aminoacyl-tRNA, thus increasing their reactivity as acceptors for peptidyl transferase. This Beutenbergia cavernae (strain ATCC BAA-8 / DSM 12333 / CCUG 43141 / JCM 11478 / NBRC 16432 / NCIMB 13614 / HKI 0122) protein is Elongation factor P.